Reading from the N-terminus, the 622-residue chain is Low affinity potassium transport system protein Kup (622 aa).

12 consecutive transmembrane segments (helical) span residues 9-29 (LPAI…TSPL), 49-69 (VFGF…IKYL), 103-123 (VIMG…TPAI), 137-157 (PQLD…LFMI), 165-185 (VGKL…GLGL), 213-233 (VSFI…ALYA), 247-267 (WFTV…ALLL), 276-296 (PFFL…AALA), 337-357 (IYIP…IVSF), 363-383 (LAAA…ILST), 396-416 (FVAL…TANL), and 419-439 (LLSG…VMTT).

It belongs to the HAK/KUP transporter (TC 2.A.72) family.

It is found in the cell inner membrane. The catalysed reaction is K(+)(in) + H(+)(in) = K(+)(out) + H(+)(out). Its function is as follows. Responsible for the low-affinity transport of potassium into the cell. Likely operates as a K(+):H(+) symporter. This is Low affinity potassium transport system protein Kup from Escherichia coli O157:H7.